The chain runs to 318 residues: NADH-ubiquinone oxidoreductase chain 1 (318 aa).

The next 8 membrane-spanning stretches (helical) occupy residues F2–L22, M70–P90, L100–G120, V136–M156, L172–E192, L222–F242, E253–I273, and L294–I314.

Belongs to the complex I subunit 1 family. As to quaternary structure, core subunit of respiratory chain NADH dehydrogenase (Complex I) which is composed of 45 different subunits.

It localises to the mitochondrion inner membrane. It catalyses the reaction a ubiquinone + NADH + 5 H(+)(in) = a ubiquinol + NAD(+) + 4 H(+)(out). Core subunit of the mitochondrial membrane respiratory chain NADH dehydrogenase (Complex I) which catalyzes electron transfer from NADH through the respiratory chain, using ubiquinone as an electron acceptor. Essential for the catalytic activity and assembly of complex I. The chain is NADH-ubiquinone oxidoreductase chain 1 (MT-ND1) from Balaenoptera musculus (Blue whale).